We begin with the raw amino-acid sequence, 1036 residues long: Chitin synthase 1 (1036 aa).

A compositionally biased stretch (pro residues) spans 1 to 10 (MDGPPSPTRV). The disordered stretch occupies residues 1 to 153 (MDGPPSPTRV…RRPLPPAPLF (153 aa)). N-linked (GlcNAc...) asparagine glycosylation occurs at asparagine 38. The segment covering 86-108 (PSIPLSSSNPRSPIRPSTPSRVS) has biased composition (low complexity). The N-linked (GlcNAc...) asparagine glycan is linked to asparagine 179. A disordered region spans residues 189 to 229 (RASLKSAHSYTTDSTFTEDDDITNEKLNHYGPAPEGRQDRR). A compositionally biased stretch (polar residues) spans 194-203 (SAHSYTTDST). Helical transmembrane passes span 659-679 (FISL…FYFV), 699-719 (IFVI…ILSL), 733-753 (TMVT…YIVI), 776-796 (IFTN…LMSF), 808-828 (SAQY…YAFC), 908-928 (YVVA…SEAY), and 945-967 (WSVA…INIV). A disordered region spans residues 994–1019 (AGLGSGFSESGKTGITSGSGMSGMSL). Over residues 1001-1019 (SESGKTGITSGSGMSGMSL) the composition is skewed to low complexity.

Belongs to the chitin synthase family. Class II subfamily.

It localises to the cell membrane. It carries out the reaction [(1-&gt;4)-N-acetyl-beta-D-glucosaminyl](n) + UDP-N-acetyl-alpha-D-glucosamine = [(1-&gt;4)-N-acetyl-beta-D-glucosaminyl](n+1) + UDP + H(+). Its function is as follows. Polymerizes chitin, a structural polymer of the cell wall and septum, by transferring the sugar moiety of UDP-GlcNAc to the non-reducing end of the growing chitin polymer. CHS1 mainly responsible for normal yeast cell reproductive growth. The polypeptide is Chitin synthase 1 (Exophiala dermatitidis (strain ATCC 34100 / CBS 525.76 / NIH/UT8656) (Black yeast)).